A 62-amino-acid chain; its full sequence is Photosystem II reaction center protein Z (62 aa).

Helical transmembrane passes span 8–28 (TVLALIATSFLMVIGVPVIFA) and 41–61 (FSGALLWISLVFAVGILNSFV).

This sequence belongs to the PsbZ family. In terms of assembly, PSII is composed of 1 copy each of membrane proteins PsbA, PsbB, PsbC, PsbD, PsbE, PsbF, PsbH, PsbI, PsbJ, PsbK, PsbL, PsbM, PsbT, PsbY, PsbZ, Psb30/Ycf12, at least 3 peripheral proteins of the oxygen-evolving complex and a large number of cofactors. It forms dimeric complexes.

It is found in the plastid. It localises to the chloroplast thylakoid membrane. Its function is as follows. May control the interaction of photosystem II (PSII) cores with the light-harvesting antenna, regulates electron flow through the 2 photosystem reaction centers. PSII is a light-driven water plastoquinone oxidoreductase, using light energy to abstract electrons from H(2)O, generating a proton gradient subsequently used for ATP formation. This chain is Photosystem II reaction center protein Z, found in Mesostigma viride (Green alga).